The primary structure comprises 475 residues: 3-isopropylmalate dehydratase large subunit (475 aa).

Residues Cys353, Cys414, and Cys417 each coordinate [4Fe-4S] cluster.

The protein belongs to the aconitase/IPM isomerase family. LeuC type 1 subfamily. In terms of assembly, heterodimer of LeuC and LeuD. [4Fe-4S] cluster is required as a cofactor.

It carries out the reaction (2R,3S)-3-isopropylmalate = (2S)-2-isopropylmalate. It functions in the pathway amino-acid biosynthesis; L-leucine biosynthesis; L-leucine from 3-methyl-2-oxobutanoate: step 2/4. In terms of biological role, catalyzes the isomerization between 2-isopropylmalate and 3-isopropylmalate, via the formation of 2-isopropylmaleate. This Ectopseudomonas mendocina (strain ymp) (Pseudomonas mendocina) protein is 3-isopropylmalate dehydratase large subunit.